The primary structure comprises 98 residues: Large ribosomal subunit protein uL23 (98 aa).

Belongs to the universal ribosomal protein uL23 family. Part of the 50S ribosomal subunit. Contacts protein L29, and trigger factor when it is bound to the ribosome.

Its function is as follows. One of the early assembly proteins it binds 23S rRNA. One of the proteins that surrounds the polypeptide exit tunnel on the outside of the ribosome. Forms the main docking site for trigger factor binding to the ribosome. This is Large ribosomal subunit protein uL23 from Methylorubrum extorquens (strain CM4 / NCIMB 13688) (Methylobacterium extorquens).